Here is a 92-residue protein sequence, read N- to C-terminus: Small ribosomal subunit protein uS19 (92 aa).

This sequence belongs to the universal ribosomal protein uS19 family.

Protein S19 forms a complex with S13 that binds strongly to the 16S ribosomal RNA. This chain is Small ribosomal subunit protein uS19, found in Dinoroseobacter shibae (strain DSM 16493 / NCIMB 14021 / DFL 12).